Consider the following 148-residue polypeptide: Ponticulin-like protein D (148 aa).

The N-terminal stretch at 1 to 20 is a signal peptide; that stretch reads MLLNKSLLLLVAFVFAIVSA. Asparagine 67 carries N-linked (GlcNAc...) asparagine glycosylation. Aspartate 125 carries GPI-like-anchor amidated aspartate lipidation. Residues 126 to 148 constitute a propeptide, removed in mature form; sequence SSAAATMIASFSAILIALLFALL.

The protein belongs to the ponticulin family. In terms of processing, the GPI-like-anchor contains a phosphoceramide group, rather than a phosphatidyl group.

The protein localises to the cell membrane. The polypeptide is Ponticulin-like protein D (ponD) (Dictyostelium discoideum (Social amoeba)).